A 415-amino-acid chain; its full sequence is Putative transcription factor BOFH (415 aa).

Residues 159–221 form a disordered region; it reads SQEPVQHQDQ…NEGEDDDGMD (63 aa). Over residues 174-183 the composition is skewed to gly residues; the sequence is INGGGRGGYW. Positions 193–202 are enriched in basic residues; that stretch reads QQQRRRKKRL. The segment covering 206 to 220 has biased composition (acidic residues); sequence ETDDDGNEGEDDDGM. 3 DNA-binding regions span residues 234–238, 303–310, and 374–377; these read REHPF, NKPKMRHY, and YVPT.

The protein belongs to the FLO/LFY family. Acts in the floral primordia.

The protein resides in the nucleus. Controls floral meristem identity. Is required very early in flower development and may act here as a transcription factor. This Brassica oleracea var. botrytis (Cauliflower) protein is Putative transcription factor BOFH.